Here is a 3014-residue protein sequence, read N- to C-terminus: Genome polyprotein (3014 aa).

At serine 2 the chain carries N-acetylserine; by host. The segment at 2–23 (STNPKPQRKTKRNTNRRPQDVK) is interaction with STAT1. The interval 2 to 58 (STNPKPQRKTKRNTNRRPQDVKFPGGGQIVGGVYLLPRRGPKLGVRATRKNSERSQP) is interaction with EIF2AK2/PKR. Residues 2–59 (STNPKPQRKTKRNTNRRPQDVKFPGGGQIVGGVYLLPRRGPKLGVRATRKNSERSQPR) form an interaction with DDX3X region. The interval 2–75 (STNPKPQRKT…PKARRPTGRS (74 aa)) is disordered. Topologically, residues 2–168 (STNPKPQRKT…EDGINYATGN (167 aa)) are cytoplasmic. Short sequence motifs (nuclear localization signal) lie at residues 5 to 13 (PKPQRKTKR) and 38 to 43 (PRRGPK). Basic residues predominate over residues 7–16 (PQRKTKRNTN). Serine 53 is subject to Phosphoserine; by host. 2 consecutive short sequence motifs (nuclear localization signal) follow at residues 58–64 (PRGRRQP) and 66–71 (PKARRP). The span at 58 to 72 (PRGRRQPIPKARRPT) shows a compositional bias: basic residues. Serine 99 and serine 116 each carry phosphoserine; by host. Residues 112 to 152 (PRRKSPNLGRVIHTLTCGFPHLMGYIPLVGGPVGGVSRALA) form an important for endoplasmic reticulum and mitochondrial localization region. Residues 122 to 173 (VIHTLTCGFPHLMGYIPLVGGPVGGVSRALAHGVKVLEDGINYATGNLPGCP) form an interaction with APOA2 region. The tract at residues 164 to 167 (YATG) is important for lipid droplets localization. A helical membrane pass occupies residues 169 to 189 (LPGCPFSIFVLALLWCLTVPA). A propeptide spans 178–191 (VLALLWCLTVPASA) (ER anchor for the core protein, removed in mature form by host signal peptidase). Over 190–358 (SAVPYRNASG…AGGHWGVLLA (169 aa)) the chain is Lumenal. Asparagine 196, asparagine 209, and asparagine 234 each carry an N-linked (GlcNAc...) asparagine; by host glycan. The interval 265–296 (LAGGAAFCSALYVGDACGALSLVGQMFTYKPR) is important for fusion. Residue asparagine 305 is glycosylated (N-linked (GlcNAc...) asparagine; by host). The helical transmembrane segment at 359–379 (AAYFASTANWAKVILVLFLFA) threads the bilayer. At 380 to 726 (GVDGRTHTVG…WEYIMLVFLL (347 aa)) the chain is on the lumenal side. Positions 385 to 412 (THTVGGTVGQGLKSLTSFFNPGPQRQLQ) are HVR1. N-linked (GlcNAc...) (high mannose) asparagine; by host glycans are attached at residues asparagine 417, asparagine 423, and asparagine 430. Cystine bridges form between cysteine 429-cysteine 553, cysteine 452-cysteine 459, cysteine 487-cysteine 495, and cysteine 504-cysteine 509. N-linked (GlcNAc...) asparagine; by host glycosylation occurs at asparagine 448. The HVR2 stretch occupies residues 475 to 479 (ATISG). The tract at residues 481-494 (SDDKPYCWHYPPRP) is CD81-binding 1. An N-linked (GlcNAc...) asparagine; by host glycan is attached at asparagine 533. Residues 545 to 552 (PPAGNWFG) form a CD81-binding 2 region. Asparagine 557 is a glycosylation site (N-linked (GlcNAc...) asparagine; by host). Cysteines 565 and 570 form a disulfide. N-linked (GlcNAc...) asparagine; by host glycosylation occurs at asparagine 578. 3 cysteine pairs are disulfide-bonded: cysteine 582–cysteine 586, cysteine 598–cysteine 621, and cysteine 608–cysteine 645. Asparagine 624 and asparagine 646 each carry an N-linked (GlcNAc...) (high mannose) asparagine; by host glycan. A disulfide bridge connects residues cysteine 653 and cysteine 678. The tract at residues 661–672 (AELSPLLHTTTQ) is PKR/eIF2-alpha phosphorylation homology domain (PePHD). A helical membrane pass occupies residues 727 to 747 (LADARICTCLLILLLICQAEA). At 748–758 (TCKNVIVLNAA) the chain is on the lumenal side. Residues 759 to 779 (AAAGNHGFFWGLLVVCLAWHV) form a helical membrane-spanning segment. Residues 780–783 (KGRL) lie on the Cytoplasmic side of the membrane. A helical transmembrane segment spans residues 784 to 804 (VPGATYLCLGVWPLLLVRLLR). The Lumenal segment spans residues 805-814 (PHRALALDSS). A helical transmembrane segment spans residues 815-835 (DGGTVGCLVLIVLTIFTLTPG). The Cytoplasmic segment spans residues 836–882 (YKKKVVLVMWWLQYFIARVEAIIHVWVPPLQVKGGRDAVIMLTCLFH). The chain crosses the membrane as a helical span at residues 883-903 (PALGFEITKILFGILGPLYLL). Residues 904 to 929 (QHSLTKVPYFLRARALLRLCLLAKHL) lie on the Lumenal side of the membrane. One can recognise a Peptidase C18 domain in the interval 904–1027 (QHSLTKVPYF…DIKTSGWRLL (124 aa)). The tract at residues 905 to 1207 (HSLTKVPYFL…PVENLETTMR (303 aa)) is protease NS2-3. Cysteine 923 carries the S-palmitoyl cysteine; by host lipid modification. Residues 930–950 (VYGKYVQAALLHLGRLTGTYI) traverse the membrane as a helical segment. The segment at 930–950 (VYGKYVQAALLHLGRLTGTYI) is interaction with host SCPS1. Residues 951–1658 (YDHLAPMKDW…CMSADLEVIT (708 aa)) are Cytoplasmic-facing. Residues histidine 953, glutamate 973, and cysteine 994 each act as for protease NS2 activity; shared with dimeric partner in the active site. In terms of domain architecture, Peptidase S29 spans 1028–1209 (APITAYAQQT…ENLETTMRSP (182 aa)). Active-site charge relay system; for serine protease NS3 activity residues include histidine 1084 and aspartate 1108. Zn(2+)-binding residues include cysteine 1124 and cysteine 1126. Catalysis depends on serine 1166, which acts as the Charge relay system; for serine protease NS3 activity. Zn(2+)-binding residues include cysteine 1172 and histidine 1176. A Helicase ATP-binding domain is found at 1218 to 1351 (PAVPHEFQVG…ARLVVLATAI (134 aa)). 1231 to 1238 (APTGSGKS) is an ATP binding site. Mg(2+) is bound by residues serine 1238 and glutamate 1318. A DECH box motif is present at residues 1317 to 1320 (DECH). The region spanning 1362 to 1539 (NIEEVALPSE…DLTPAETTVR (178 aa)) is the Helicase C-terminal domain. Residues 1487 to 1499 (QRRGRTGRGRHGI) are RNA-binding. A helical transmembrane segment spans residues 1659–1679 (STWVLVGGVVAALAAYCLTVG). The tract at residues 1680 to 1691 (SVAIVGRIILSG) is NS3-binding. Residues 1680 to 1806 (SVAIVGRIIL…AVTSPLTTHQ (127 aa)) are Cytoplasmic-facing. Residues 1807 to 1827 (TLLFNILGGWVASQIAPPTAA) form a helical membrane-spanning segment. Residues 1828-1829 (TA) are Lumenal-facing. The helical transmembrane segment at 1830–1850 (FVVSGMAGAAVGNIGLGRVLI) threads the bilayer. Aspartate 1851 is a topological domain (cytoplasmic). A helical membrane pass occupies residues 1852 to 1872 (ILAGYGTGVAGALVAFKIMCG). The Lumenal portion of the chain corresponds to 1873–1882 (ERPTAEELVN). Residues 1883 to 1903 (LLPSILCPGALVVGVICAAVL) form a helical membrane-spanning segment. Residues 1904–1973 (RRHIGPGEGA…WIGEDYSTPC (70 aa)) lie on the Cytoplasmic side of the membrane. The S-palmitoyl cysteine; by host moiety is linked to residue cysteine 1973. Residues 1974-2003 (DGTWLRAIWDWVCTALTDFKAWLQAKLLPQ) lie within the membrane without spanning it. Over 2004 to 2993 (LPGVPFFSCQ…YHSMSRARPR (990 aa)) the chain is Cytoplasmic. Zn(2+) contacts are provided by cysteine 2012, cysteine 2030, cysteine 2032, and cysteine 2053. Positions 2121-2209 (EFFTELDGVR…ANSSASQLSA (89 aa)) are FKBP8-binding. The interval 2121–2334 (EFFTELDGVR…VPLPRRKRKP (214 aa)) is transcriptional activation. Residues 2136-2140 (PPCNP) are interaction with non-structural protein 4A. Residues 2190-2441 (RLNRGSPPSL…ALITPCSAEE (252 aa)) form an interaction with host SKP2 region. Residues serine 2195, serine 2198, serine 2202, serine 2205, serine 2208, and serine 2211 each carry the phosphoserine; by host modification. Positions 2211–2250 (SLKATCTIQGHHPDADLIKANLLWRQCMGGNITRVEAENK) are ISDR. The tract at residues 2211-2276 (SLKATCTIQG…REISVSADCF (66 aa)) is interaction with EIF2AK2/PKR. The NS4B-binding stretch occupies residues 2250-2307 (KVEILDCFKPLKEEEDDREISVSADCFKKGPAFPPALPVWARPGYDPPLLETWKRPDY). The tract at residues 2300–2378 (ETWKRPDYDP…GTSSQHDSGP (79 aa)) is V3. 2 disordered regions span residues 2315-2342 (CPIP…DSTV) and 2359-2412 (PSIE…GSWS). Pro residues predominate over residues 2316-2327 (PIPPAGPPPVPL). The short motif at 2323 to 2326 (PPVP) is the SH3-binding element. The short motif at 2328 to 2337 (PRRKRKPMEL) is the Nuclear localization signal element. Residues 2361–2375 (IEGQDSALGTSSQHD) are compositionally biased toward polar residues. Residues 2376–2385 (SGPEEKRDDN) show a composition bias toward basic and acidic residues. Position 2465 is a phosphoserine; by host (serine 2465). The region spanning 2637-2755 (PMAFSYDTRC…ICESQGTHED (119 aa)) is the RdRp catalytic domain. The Mg(2+) site is built by aspartate 2643, aspartate 2741, and aspartate 2742. A helical membrane pass occupies residues 2994–3014 (NLLLCLLLLSVGVGIFLLPAR).

It belongs to the hepacivirus polyprotein family. In terms of assembly, homooligomer. Interacts with E1 (via C-terminus). Interacts with the non-structural protein 5A. Interacts (via N-terminus) with host STAT1 (via SH2 domain); this interaction results in decreased STAT1 phosphorylation and ubiquitin-mediated proteasome-dependent STAT1 degradation, leading to decreased IFN-stimulated gene transcription. Interacts with host STAT3; this interaction constitutively activates STAT3. Interacts with host LTBR receptor. Interacts with host TNFRSF1A receptor and possibly induces apoptosis. Interacts with host HNRPK. Interacts with host YWHAE. Interacts with host UBE3A/E6AP. Interacts with host DDX3X. Interacts with host APOA2. Interacts with host RXRA protein. Interacts with host SP110 isoform 3/Sp110b; this interaction sequesters the transcriptional corepressor SP110 away from the nucleus. Interacts with host CREB3 nuclear transcription protein; this interaction triggers cell transformation. Interacts with host ACY3. Interacts with host C1QR1. Interacts with host RBM24; this interaction, which enhances the interaction of the mature core protein with 5'-UTR, may inhibit viral translation and favor replication. Interacts with host EIF2AK2/PKR; this interaction induces the autophosphorylation of EIF2AK2. Part of the viral assembly initiation complex composed of NS2, E1, E2, NS3, NS4A, NS5A and the mature core protein. As to quaternary structure, forms a heterodimer with envelope glycoprotein E2. Interacts with mature core protein. Interacts with protease NS2. The heterodimer E1/E2 interacts with host CLDN1; this interaction plays a role in viral entry into host cell. Interacts with host SPSB2 (via C-terminus). Part of the viral assembly initiation complex composed of NS2, E1, E2, NS3, NS4A, NS5A and the mature core protein. Interacts with host NEURL3; this interaction prevents E1 binding to glycoprotein E2. Forms a heterodimer with envelope glycoprotein E1. Interacts with host CD81 and SCARB1 receptors; these interactions play a role in viral entry into host cell. Interacts with host EIF2AK2/PKR; this interaction inhibits EIF2AK2 and probably allows the virus to evade the innate immune response. Interacts with host CD209/DC-SIGN and CLEC4M/DC-SIGNR. Interact with host SPCS1; this interaction is essential for viral particle assembly. Interacts with protease NS2. The heterodimer E1/E2 interacts with host CLDN1; this interaction plays a role in viral entry into host cell. Part of the viral assembly initiation complex composed of NS2, E1, E2, NS3, NS4A, NS5A and the mature core protein. Interacts with host SLC3A2/4F2hc; the interaction may facilitate viral entry into host cell. Interacts with human PLSCR1. In terms of assembly, homohexamer. Homoheptamer. Interacts with protease NS2. As to quaternary structure, homodimer. Interacts with host SPCS1; this interaction is essential for viral particle assembly. Interacts with envelope glycoprotein E1. Interacts with envelope glycoprotein E2. Interacts with viroporin p7. Interacts with serine protease/helicase NS3. Part of the replication complex composed of NS2, NS3, NS4A, NS4B, NS5A and the RNA-directed RNA polymerase embedded in an ER-derived membranous web. Part of the viral assembly initiation complex composed of NS2, E1, E2, NS3, NS4A, NS5A and the mature core protein. Interacts with protease NS2. Interacts with non-structural protein 4A; this interaction stabilizes the folding of NS3 serine protease. NS3-NS4A interaction is essential for NS3 activation and allows membrane anchorage of the latter. NS3/NS4A complex also prevents phosphorylation of host IRF3, thus preventing the establishment of dsRNA induced antiviral state. Interacts with host MAVS; this interaction leads to the cleavage and inhibition of host MAVS. Interacts with host TICAM1; this interaction leads to the cleavage and inhibition of host TICAM1. Interacts with host TANK-binding kinase/TBK1; this interaction results in the inhibition of the association between TBK1 and IRF3, which leads to the inhibition of IRF3 activation. Interacts with host RBM24. Part of the replication complex composed of NS2, NS3, NS4A, NS4B, NS5A and the RNA-directed RNA polymerase embedded in an ER-derived membranous web. Part of the viral assembly initiation complex composed of NS2, E1, E2, NS3, NS4A, NS5A and the mature core protein. In terms of assembly, interacts with NS3 serine protease; this interaction stabilizes the folding of NS3 serine protease. NS3-NS4A interaction is essential for NS3 activation and allows membrane anchorage of the latter. Interacts with non-structural protein 5A (via N-terminus). Part of the replication complex composed of NS2, NS3, NS4A, NS4B, NS5A and the RNA-directed RNA polymerase embedded in an ER-derived membranous web. Part of the viral assembly initiation complex composed of NS2, E1, E2, NS3, NS4A, NS5A and the mature core protein. As to quaternary structure, homomultimer. Interacts with non-structural protein NS5A. Interacts with host PLA2G4C; this interaction likely initiates the recruitment of replication complexes to lipid droplets. Interacts with host STING; this interaction disrupts the interaction between STING and TBK1 thereby suppressing the interferon signaling. Part of the replication complex composed of NS2, NS3, NS4A, NS4B, NS5A and the RNA-directed RNA polymerase embedded in an ER-derived membranous web. Monomer. Homodimer; dimerization is required for RNA-binding. Interacts with the mature core protein. Interacts (via N-terminus) with non-structural protein 4A. Interacts with non-structural protein 4B. Interacts (via region D2) with RNA-directed RNA polymerase. Part of the viral assembly initiation complex composed of NS2, E1, E2, NS3, NS4A, NS5A and the mature core protein. Part of the replication complex composed of NS2, NS3, NS4A, NS4B, NS5A and the RNA-directed RNA polymerase embedded in an ER-derived membranous web. Interacts with host GRB2. Interacts with host BIN1. Interacts with host PIK3R1. Interacts with host SRCAP. Interacts with host FKBP8. Interacts (via C-terminus) with host VAPB (via MSP domain). Interacts with host EIF2AK2/PKR; this interaction leads to disruption of EIF2AK2 dimerization by NS5A and probably allows the virus to evade the innate immune response. Interacts (via N-terminus) with host PACSIN2 (via N-terminus); this interaction attenuates protein kinase C alpha-mediated phosphorylation of PACSIN2 by disrupting the interaction between PACSIN2 and PRKCA. Interacts (via N-terminus) with host SRC kinase (via SH2 domain). Interacts with most Src-family kinases. Interacts with host IFI27 and SKP2; promotes the ubiquitin-mediated proteasomal degradation of NS5A. Interacts with host GPS2. Interacts with host TNFRSF21; this interaction allows the modulation by the virus of JNK, p38 MAPK, STAT3, and Akt signaling pathways in a DR6-dependent manner. Interacts (via N-terminus) with host CIDEB (via N-terminus); this interaction seems to regulate the association of HCV particles with APOE. Interacts with host CHKA/Choline Kinase-alpha; CHKA bridges host PI4KA and NS5A and potentiates NS5A-stimulated PI4KA activity, which then facilitates the targeting of the ternary complex to the ER for viral replication. Interacts with host SPSB2 (via C-terminus); this interaction targets NS5A for ubiquitination and degradation. Interacts with host RAB18; this interaction may promote the association of NS5A and other replicase components with lipid droplets. Interacts (via region D2) with host PPIA/CYPA; the interaction stimulates RNA-binding ability of NS5A and is dependent on the peptidyl-prolyl cis-trans isomerase activity of PPIA/CYPA. Interacts with host TRIM14; this interaction induces the degradation of NS5A. In terms of assembly, homooligomer. Interacts with non-structural protein 5A. Interacts with host VAPB. Interacts with host PRK2/PKN2. Interacts with host HNRNPA1 and SEPT6; these interactions facilitate viral replication. Part of the replication complex composed of NS2, NS3, NS4A, NS4B, NS5A and the RNA-directed RNA polymerase. Zn(2+) is required as a cofactor. It depends on Mg(2+) as a cofactor. Specific enzymatic cleavages in vivo yield mature proteins. The structural proteins, core, E1, E2 and p7 are produced by proteolytic processing by host signal peptidases. The core protein precursor is synthesized as a 23 kDa, which is retained in the ER membrane through the hydrophobic signal peptide. Cleavage by the signal peptidase releases the 21 kDa mature core protein. The cleavage of the core protein precursor occurs between aminoacids 176 and 188 but the exact cleavage site is not known. Some degraded forms of the core protein appear as well during the course of infection. The other proteins (p7, NS2, NS3, NS4A, NS4B, NS5A and NS5B) are cleaved by the viral proteases. Autoprocessing between NS2 and NS3 is mediated by the NS2 cysteine protease catalytic domain and regulated by the NS3 N-terminal domain. Post-translationally, phosphorylated by host PKC and PKA. In terms of processing, ubiquitinated; mediated by UBE3A and leading to core protein subsequent proteasomal degradation. Highly N-glycosylated. Post-translationally, palmitoylation is required for NS2/3 autoprocessing and E2 recruitment to membranes. In terms of processing, palmitoylated. This modification may play a role in its polymerization or in protein-protein interactions. Phosphorylated on serines in a basal form termed p56. p58 is a hyperphosphorylated form of p56. p56 and p58 coexist in the cell in roughly equivalent amounts. Hyperphosphorylation is dependent on the presence of NS4A. Host CSNK1A1/CKI-alpha or RPS6KB1 kinases may be responsible for NS5A phosphorylation. Post-translationally, tyrosine phosphorylation is essential for the interaction with host SRC. In terms of processing, the N-terminus is phosphorylated by host PRK2/PKN2.

It localises to the host endoplasmic reticulum membrane. Its subcellular location is the host mitochondrion membrane. It is found in the virion. The protein localises to the host cytoplasm. The protein resides in the host nucleus. It localises to the host lipid droplet. Its subcellular location is the virion membrane. It is found in the host mitochondrion. The protein localises to the host cell membrane. The protein resides in the host perinuclear region. The enzyme catalyses Hydrolysis of four peptide bonds in the viral precursor polyprotein, commonly with Asp or Glu in the P6 position, Cys or Thr in P1 and Ser or Ala in P1'.. It catalyses the reaction a ribonucleoside 5'-triphosphate + H2O = a ribonucleoside 5'-diphosphate + phosphate + H(+). The catalysed reaction is ATP + H2O = ADP + phosphate + H(+). It carries out the reaction RNA(n) + a ribonucleoside 5'-triphosphate = RNA(n+1) + diphosphate. Inhibited by the antiviral drug hexamethylene amiloride. Inhibition by amantadine appears to be genotype-dependent. Also inhibited by long-alkyl-chain iminosugar derivatives. Its activity is regulated as follows. Activity is up-regulated by PRK2/PKN2-mediated phosphorylation. In terms of biological role, packages viral RNA to form a viral nucleocapsid, and promotes virion budding. Participates in the viral particle production as a result of its interaction with the non-structural protein 5A. Binds RNA and may function as a RNA chaperone to induce the RNA structural rearrangements taking place during virus replication. Modulates viral translation initiation by interacting with viral IRES and 40S ribosomal subunit. Affects various cell signaling pathways, host immunity and lipid metabolism. Prevents the establishment of cellular antiviral state by blocking the interferon-alpha/beta (IFN-alpha/beta) and IFN-gamma signaling pathways and by blocking the formation of phosphorylated STAT1 and promoting ubiquitin-mediated proteasome-dependent degradation of STAT1. Activates STAT3 leading to cellular transformation. Regulates the activity of cellular genes, including c-myc and c-fos. May repress the promoter of p53, and sequester CREB3 and SP110 isoform 3/Sp110b in the cytoplasm. Represses cell cycle negative regulating factor CDKN1A, thereby interrupting an important check point of normal cell cycle regulation. Targets transcription factors involved in the regulation of inflammatory responses and in the immune response: suppresses TNF-induced NF-kappa-B activation, and activates AP-1. Binds to dendritic cells (DCs) via C1QR1, resulting in down-regulation of T-lymphocytes proliferation. Alters lipid metabolism by interacting with hepatocellular proteins involved in lipid accumulation and storage. Induces up-regulation of FAS promoter activity, and thereby contributes to the increased triglyceride accumulation in hepatocytes (steatosis). Functionally, forms a heterodimer with envelope glycoprotein E2, which mediates virus attachment to the host cell, virion internalization through clathrin-dependent endocytosis and fusion with host membrane. Fusion with the host cell is most likely mediated by both E1 and E2, through conformational rearrangements of the heterodimer required for fusion rather than a classical class II fusion mechanism. E1/E2 heterodimer binds host apolipoproteins such as APOB and ApoE thereby forming a lipo-viro-particle (LVP). APOE associated to the LVP allows the initial virus attachment to cell surface receptors such as the heparan sulfate proteoglycans (HSPGs), syndecan-1 (SDC1), syndecan-1 (SDC2), the low-density lipoprotein receptor (LDLR) and scavenger receptor class B type I (SCARB1). The cholesterol transfer activity of SCARB1 allows E2 exposure and binding of E2 to SCARB1 and the tetraspanin CD81. E1/E2 heterodimer binding on CD81 activates the epithelial growth factor receptor (EGFR) signaling pathway. Diffusion of the complex E1-E2-EGFR-SCARB1-CD81 to the cell lateral membrane allows further interaction with Claudin 1 (CLDN1) and occludin (OCLN) to finally trigger HCV entry. Its function is as follows. Forms a heterodimer with envelope glycoprotein E1, which mediates virus attachment to the host cell, virion internalization through clathrin-dependent endocytosis and fusion with host membrane. Fusion with the host cell is most likely mediated by both E1 and E2, through conformational rearrangements of the heterodimer required for fusion rather than a classical class II fusion mechanism. The interaction between envelope glycoprotein E2 and host apolipoprotein E/APOE allows the proper assembly, maturation and infectivity of the viral particles. This interaction is probably promoted via the up-regulation of cellular autophagy by the virus. E1/E2 heterodimer binds host apolipoproteins such as APOB and APOE thereby forming a lipo-viro-particle (LVP). APOE associated to the LVP allows the initial virus attachment to cell surface receptors such as the heparan sulfate proteoglycans (HSPGs), syndecan-1 (SDC1), syndecan-1 (SDC2), the low-density lipoprotein receptor (LDLR) and scavenger receptor class B type I (SCARB1). The cholesterol transfer activity of SCARB1 allows E2 exposure and binding of E2 to SCARB1 and the tetraspanin CD81. E1/E2 heterodimer binding on CD81 activates the epithelial growth factor receptor (EGFR) signaling pathway. Diffusion of the complex E1-E2-EGFR-SCARB1-CD81 to the cell lateral membrane allows further interaction with Claudin 1 (CLDN1) and occludin (OCLN) to finally trigger HCV entry. Inhibits host EIF2AK2/PKR activation, preventing the establishment of an antiviral state. Viral ligand for CD209/DC-SIGN and CLEC4M/DC-SIGNR, which are respectively found on dendritic cells (DCs), and on liver sinusoidal endothelial cells and macrophage-like cells of lymph node sinuses. These interactions allow the capture of circulating HCV particles by these cells and subsequent facilitated transmission to permissive cells such as hepatocytes and lymphocyte subpopulations. The interaction between E2 and host amino acid transporter complex formed by SLC3A2 and SLC7A5/LAT1 may facilitate viral entry into host cell. Ion channel protein that acts as a viroporin and plays an essential role in the assembly, envelopment and secretion of viral particles. Regulates the host cell secretory pathway, which induces the intracellular retention of viral glycoproteins and favors assembly of viral particles. Creates a pore in acidic organelles and releases Ca(2+) and H(+) in the cytoplasm of infected cells, leading to a productive viral infection. High levels of cytoplasmic Ca(2+) may trigger membrane trafficking and transport of viral ER-associated proteins to viroplasms, sites of viral genome replication. This ionic imbalance induces the assembly of the inflammasome complex, which triggers the maturation of pro-IL-1beta into IL-1beta through the action of caspase-1. Targets also host mitochondria and induces mitochondrial depolarization. In addition of its role as a viroporin, acts as a lipid raft adhesion factor. In terms of biological role, cysteine protease required for the proteolytic auto-cleavage between the non-structural proteins NS2 and NS3. The N-terminus of NS3 is required for the function of NS2 protease (active region NS2-3). Promotes the initiation of viral particle assembly by mediating the interaction between structural and non-structural proteins. Functionally, displays three enzymatic activities: serine protease with a chymotrypsin-like fold, NTPase and RNA helicase. NS3 serine protease, in association with NS4A, is responsible for the cleavages of NS3-NS4A, NS4A-NS4B, NS4B-NS5A and NS5A-NS5B. The NS3/NS4A complex prevents phosphorylation of host IRF3, thus preventing the establishment of dsRNA induced antiviral state. The NS3/NS4A complex induces host amino acid transporter component SLC3A2, thus contributing to HCV propagation. NS3 RNA helicase binds to RNA and unwinds both dsDNA and dsRNA in the 3' to 5' direction, and likely resolves RNA complicated stable secondary structures in the template strand. Binds a single ATP and catalyzes the unzipping of a single base pair of dsRNA. Inhibits host antiviral proteins TBK1 and IRF3 thereby preventing the establishment of an antiviral state. Cleaves host MAVS/CARDIF thereby preventing the establishment of an antiviral state. Cleaves host TICAM1/TRIF, thereby disrupting TLR3 signaling and preventing the establishment of an antiviral state. Its function is as follows. Induces a specific membrane alteration that serves as a scaffold for the virus replication complex. This membrane alteration gives rise to the so-called ER-derived membranous web that contains the replication complex. NS4B self-interaction contributes to its function in membranous web formation. Promotes host TRIF protein degradation in a CASP8-dependent manner thereby inhibiting host TLR3-mediated interferon signaling. Disrupts the interaction between STING and TBK1 contributing to the inhibition of interferon signaling. Phosphorylated protein that is indispensable for viral replication and assembly. Both hypo- and hyperphosphorylated states are required for the viral life cycle. The hyperphosphorylated form of NS5A is an inhibitor of viral replication. Involved in RNA-binding and especially in binding to the viral genome. Zinc is essential for RNA-binding. Participates in the viral particle production as a result of its interaction with the mature viral core protein. Its interaction with host VAPB may target the viral replication complex to vesicles. Down-regulates viral IRES translation initiation. Mediates interferon resistance, presumably by interacting with and inhibiting host EIF2AK2/PKR. Prevents BIN1-induced apoptosis. Acts as a transcriptional activator of some host genes important for viral replication when localized in the nucleus. Via the interaction with host PACSIN2, modulates lipid droplet formation in order to promote virion assembly. Modulates TNFRSF21/DR6 signaling pathway for viral propagation. In terms of biological role, RNA-dependent RNA polymerase that performs primer-template recognition and RNA synthesis during viral replication. Initiates RNA transcription/replication at a flavin adenine dinucleotide (FAD), resulting in a 5'- FAD cap on viral RNAs. In this way, recognition of viral 5' RNA by host pattern recognition receptors can be bypassed, thereby evading activation of antiviral pathways. The chain is Genome polyprotein from Hepatitis C virus genotype 5a (isolate EUH1480) (HCV).